The sequence spans 156 residues: Ribosomal RNA large subunit methyltransferase H (156 aa).

Residues Leu-74, Gly-105, and 124 to 129 (LSKLTL) each bind S-adenosyl-L-methionine.

It belongs to the RNA methyltransferase RlmH family. Homodimer.

It localises to the cytoplasm. The enzyme catalyses pseudouridine(1915) in 23S rRNA + S-adenosyl-L-methionine = N(3)-methylpseudouridine(1915) in 23S rRNA + S-adenosyl-L-homocysteine + H(+). In terms of biological role, specifically methylates the pseudouridine at position 1915 (m3Psi1915) in 23S rRNA. The protein is Ribosomal RNA large subunit methyltransferase H of Legionella pneumophila (strain Paris).